The following is a 270-amino-acid chain: 4-hydroxy-tetrahydrodipicolinate reductase (270 aa).

NAD(+) is bound by residues 11–16 (GCQGRM) and Glu37. Arg38 lines the NADP(+) pocket. NAD(+) contacts are provided by residues 101–103 (GTT) and 125–128 (ASNF). The active-site Proton donor/acceptor is His158. His159 provides a ligand contact to (S)-2,3,4,5-tetrahydrodipicolinate. Lys162 serves as the catalytic Proton donor. 168 to 169 (GT) lines the (S)-2,3,4,5-tetrahydrodipicolinate pocket.

It belongs to the DapB family.

Its subcellular location is the cytoplasm. The catalysed reaction is (S)-2,3,4,5-tetrahydrodipicolinate + NAD(+) + H2O = (2S,4S)-4-hydroxy-2,3,4,5-tetrahydrodipicolinate + NADH + H(+). It catalyses the reaction (S)-2,3,4,5-tetrahydrodipicolinate + NADP(+) + H2O = (2S,4S)-4-hydroxy-2,3,4,5-tetrahydrodipicolinate + NADPH + H(+). It participates in amino-acid biosynthesis; L-lysine biosynthesis via DAP pathway; (S)-tetrahydrodipicolinate from L-aspartate: step 4/4. Its function is as follows. Catalyzes the conversion of 4-hydroxy-tetrahydrodipicolinate (HTPA) to tetrahydrodipicolinate. The polypeptide is 4-hydroxy-tetrahydrodipicolinate reductase (Tolumonas auensis (strain DSM 9187 / NBRC 110442 / TA 4)).